Reading from the N-terminus, the 1040-residue chain is Multidrug resistance protein MdtB (1040 aa).

A run of 11 helical transmembrane segments spans residues 15–37 (LFIM…GIIG), 345–362 (FELM…YLFL), 367–389 (ATII…MVFL), 396–418 (LTLM…VIEN), 438–460 (GEIG…PLLF), 472–494 (FAIT…TPMM), 535–557 (HPWL…WVFI), 867–889 (VWLI…ESFI), 909–931 (LMIA…IGIV), 968–990 (ILMT…GVGA), and 1000–1022 (MVGG…YLLF).

Belongs to the resistance-nodulation-cell division (RND) (TC 2.A.6) family. MdtB subfamily. As to quaternary structure, part of a tripartite efflux system composed of MdtA, MdtB and MdtC. MdtB forms a heteromultimer with MdtC.

The protein resides in the cell inner membrane. Its function is as follows. The MdtABC tripartite complex confers resistance against novobiocin and deoxycholate. The protein is Multidrug resistance protein MdtB of Escherichia coli O157:H7.